The following is a 123-amino-acid chain: Cholecystokinin A (123 aa).

The N-terminal stretch at 1 to 20 (MYSGICICLLLAMLSASSKA) is a signal peptide. The propeptide occupies 21–103 (HQSEDAVVTE…FDQPHRINDR (83 aa)). A Sulfotyrosine modification is found at Tyr105. Phenylalanine amide is present on Phe111. A propeptide spanning residues 115–123 (SAEEYEYSS) is cleaved from the precursor.

It belongs to the gastrin/cholecystokinin family. In terms of processing, the precursor is cleaved by proteases to produce a number of active cholecystokinins. In terms of tissue distribution, brain, gastrointestinal tract and lung.

It localises to the secreted. The protein is Cholecystokinin A (cck-a) of Xenopus laevis (African clawed frog).